We begin with the raw amino-acid sequence, 274 residues long: 2,3,4,5-tetrahydropyridine-2,6-dicarboxylate N-succinyltransferase (274 aa).

Substrate is bound by residues arginine 106 and aspartate 143.

This sequence belongs to the transferase hexapeptide repeat family. Homotrimer.

It localises to the cytoplasm. It catalyses the reaction (S)-2,3,4,5-tetrahydrodipicolinate + succinyl-CoA + H2O = (S)-2-succinylamino-6-oxoheptanedioate + CoA. It participates in amino-acid biosynthesis; L-lysine biosynthesis via DAP pathway; LL-2,6-diaminopimelate from (S)-tetrahydrodipicolinate (succinylase route): step 1/3. The polypeptide is 2,3,4,5-tetrahydropyridine-2,6-dicarboxylate N-succinyltransferase (Albidiferax ferrireducens (strain ATCC BAA-621 / DSM 15236 / T118) (Rhodoferax ferrireducens)).